The following is a 597-amino-acid chain: Elongation factor 4 (597 aa).

The 183-residue stretch at 2 to 184 (NNIRNFSIIA…SLITKVPPPK (183 aa)) folds into the tr-type G domain. Residues 14–19 (DHGKST) and 131–134 (NKID) each bind GTP.

This sequence belongs to the TRAFAC class translation factor GTPase superfamily. Classic translation factor GTPase family. LepA subfamily.

The protein localises to the cell inner membrane. The catalysed reaction is GTP + H2O = GDP + phosphate + H(+). In terms of biological role, required for accurate and efficient protein synthesis under certain stress conditions. May act as a fidelity factor of the translation reaction, by catalyzing a one-codon backward translocation of tRNAs on improperly translocated ribosomes. Back-translocation proceeds from a post-translocation (POST) complex to a pre-translocation (PRE) complex, thus giving elongation factor G a second chance to translocate the tRNAs correctly. Binds to ribosomes in a GTP-dependent manner. The sequence is that of Elongation factor 4 from Janthinobacterium sp. (strain Marseille) (Minibacterium massiliensis).